Reading from the N-terminus, the 240-residue chain is Pyridoxine 5'-phosphate synthase (240 aa).

Residue N7 coordinates 3-amino-2-oxopropyl phosphate. A 1-deoxy-D-xylulose 5-phosphate-binding site is contributed by 9 to 10 (DH). R18 is a binding site for 3-amino-2-oxopropyl phosphate. The active-site Proton acceptor is the H43. 1-deoxy-D-xylulose 5-phosphate is bound by residues R45 and H50. Residue E70 is the Proton acceptor of the active site. T100 lines the 1-deoxy-D-xylulose 5-phosphate pocket. H191 serves as the catalytic Proton donor. Residues G192 and 213–214 (GH) contribute to the 3-amino-2-oxopropyl phosphate site.

Belongs to the PNP synthase family. In terms of assembly, homooctamer; tetramer of dimers.

The protein resides in the cytoplasm. It carries out the reaction 3-amino-2-oxopropyl phosphate + 1-deoxy-D-xylulose 5-phosphate = pyridoxine 5'-phosphate + phosphate + 2 H2O + H(+). The protein operates within cofactor biosynthesis; pyridoxine 5'-phosphate biosynthesis; pyridoxine 5'-phosphate from D-erythrose 4-phosphate: step 5/5. Its function is as follows. Catalyzes the complicated ring closure reaction between the two acyclic compounds 1-deoxy-D-xylulose-5-phosphate (DXP) and 3-amino-2-oxopropyl phosphate (1-amino-acetone-3-phosphate or AAP) to form pyridoxine 5'-phosphate (PNP) and inorganic phosphate. In Trichodesmium erythraeum (strain IMS101), this protein is Pyridoxine 5'-phosphate synthase.